We begin with the raw amino-acid sequence, 451 residues long: MGRYFGTSGIREVVNEKLTPELALKVGLALGTYLQEGKVVIGCDTRTSSVMLKNAVISGLLATGIDVIDIGLAPTPLTGFAIRLYNAEAGVTITASHNPPQYNGIKVWDRDGMAYTPDKEHELEKIIESGNFRRVPWNEVGTLKTANPRKEYIEAILREINLKGSYTVVIDAGNGAGSIVSPYLHRELGNRVITLNSDPSGFFVRELEPNKESLSMLEKTVKVLNADIGIAHDGDADRVGVVDENGEFVEYEVMLSLIAGYMLKKYGKGKIVTTVDAGFALDDYIRELGGEVVRTRVGDVAVAEELVKHGGVFGGEPSGTWIMPQWNLTPDGIFASALVLEMIDRLGPIGELAKDVPKYVTLRKKIPCSNELKNKVMNKIADLIPREFSYERIITIDGIRIENDDWWILFRPSGTEPIMRITLEAHTEEMAERLMKKAENLVKSVIKDLSS.

Serine 96 acts as the Phosphoserine intermediate in catalysis. The Mg(2+) site is built by serine 96, aspartate 233, aspartate 235, and aspartate 237. Serine 96 bears the Phosphoserine mark.

Belongs to the phosphohexose mutase family. The cofactor is Mg(2+). Activated by phosphorylation.

The catalysed reaction is alpha-D-glucosamine 1-phosphate = D-glucosamine 6-phosphate. Functionally, catalyzes the conversion of glucosamine-6-phosphate to glucosamine-1-phosphate. In Pyrococcus horikoshii (strain ATCC 700860 / DSM 12428 / JCM 9974 / NBRC 100139 / OT-3), this protein is Probable phosphoglucosamine mutase.